The following is a 142-amino-acid chain: Large-conductance mechanosensitive channel (142 aa).

3 helical membrane-spanning segments follow: residues 10–30 (FAVKGNVIDLAVGVIIGGAFG), 40–60 (LIMPVVGLVFGKLDFSNLFIV), and 86–106 (GNFITVAVNFVILAFIIFVMV).

The protein belongs to the MscL family. In terms of assembly, homopentamer.

Its subcellular location is the cell inner membrane. Functionally, channel that opens in response to stretch forces in the membrane lipid bilayer. May participate in the regulation of osmotic pressure changes within the cell. This Acidovorax ebreus (strain TPSY) (Diaphorobacter sp. (strain TPSY)) protein is Large-conductance mechanosensitive channel.